The primary structure comprises 201 residues: Recombination protein RecR (201 aa).

The C4-type zinc-finger motif lies at 59–74; sequence CSRCQNFCEAELCSIC. The Toprim domain occupies 82 to 177; sequence RVLCVVESPT…PVSRIAHGIP (96 aa).

Belongs to the RecR family.

Functionally, may play a role in DNA repair. It seems to be involved in an RecBC-independent recombinational process of DNA repair. It may act with RecF and RecO. The polypeptide is Recombination protein RecR (Hahella chejuensis (strain KCTC 2396)).